The sequence spans 118 residues: uncharacterized protein (118 aa).

This is an uncharacterized protein from Sulfolobus islandicus filamentous virus (isolate Iceland/Hveragerdi) (SIFV).